The chain runs to 157 residues: SsrA-binding protein (157 aa).

Positions 132 to 157 are disordered; the sequence is VHDKRQAQKDKDWAREKDRLFKKAYK. Basic and acidic residues predominate over residues 135-157; it reads KRQAQKDKDWAREKDRLFKKAYK.

The protein belongs to the SmpB family.

It localises to the cytoplasm. In terms of biological role, required for rescue of stalled ribosomes mediated by trans-translation. Binds to transfer-messenger RNA (tmRNA), required for stable association of tmRNA with ribosomes. tmRNA and SmpB together mimic tRNA shape, replacing the anticodon stem-loop with SmpB. tmRNA is encoded by the ssrA gene; the 2 termini fold to resemble tRNA(Ala) and it encodes a 'tag peptide', a short internal open reading frame. During trans-translation Ala-aminoacylated tmRNA acts like a tRNA, entering the A-site of stalled ribosomes, displacing the stalled mRNA. The ribosome then switches to translate the ORF on the tmRNA; the nascent peptide is terminated with the 'tag peptide' encoded by the tmRNA and targeted for degradation. The ribosome is freed to recommence translation, which seems to be the essential function of trans-translation. The polypeptide is SsrA-binding protein (Francisella tularensis subsp. tularensis (strain FSC 198)).